The following is a 254-amino-acid chain: MDYLFISSKTDPASQNIKKHVQNYGYDVFEIEKKSTQSNSSDFPISEMYIFLSKHASESKKPTLTVHTPGNLTEDNSRGGNSEEISPCNPIFNTLMLQNMNKYNEMEEYQELGFDVSFEVLHHGPTDLKAPSAFVEIGSSEEQWQIDDAAEIITNSLIDTLNSIQNSEYEKKEKIIGIGGGHYSPKFTKLALKEEYYIGYLTPKHAKLSENILNQMISKQDFDFVGIDWKGLYGEDKRKYVEFFDENDISWQRV.

The segment at 61 to 85 (KPTLTVHTPGNLTEDNSRGGNSEEI) is disordered. A compositionally biased stretch (polar residues) spans 65-84 (TVHTPGNLTEDNSRGGNSEE).

This sequence belongs to the DtdA deacylase family. In terms of assembly, monomer. The cofactor is Zn(2+).

It carries out the reaction a D-aminoacyl-tRNA + H2O = a tRNA + a D-alpha-amino acid + H(+). The catalysed reaction is glycyl-tRNA(Ala) + H2O = tRNA(Ala) + glycine + H(+). In terms of biological role, D-aminoacyl-tRNA deacylase with broad substrate specificity. By recycling D-aminoacyl-tRNA to D-amino acids and free tRNA molecules, this enzyme counteracts the toxicity associated with the formation of D-aminoacyl-tRNA entities in vivo. The sequence is that of D-aminoacyl-tRNA deacylase from Methanococcus maripaludis (strain C5 / ATCC BAA-1333).